Reading from the N-terminus, the 161-residue chain is Serine-protein kinase RsbW (161 aa).

Belongs to the anti-sigma-factor family.

It catalyses the reaction L-seryl-[protein] + ATP = O-phospho-L-seryl-[protein] + ADP + H(+). The enzyme catalyses L-threonyl-[protein] + ATP = O-phospho-L-threonyl-[protein] + ADP + H(+). In terms of biological role, negative regulator of sigma-B activity. Phosphorylates and inactivates its specific antagonist protein, RsbV. Upon phosphorylation of RsbV, RsbW is released and binds to sigma-B, thereby blocking its ability to form an RNA polymerase holoenzyme (E-sigma-B). The chain is Serine-protein kinase RsbW from Bacillus licheniformis (strain ATCC 14580 / DSM 13 / JCM 2505 / CCUG 7422 / NBRC 12200 / NCIMB 9375 / NCTC 10341 / NRRL NRS-1264 / Gibson 46).